Consider the following 377-residue polypeptide: Nitric oxide reductase FlRd-NAD(+) reductase (377 aa).

The protein belongs to the FAD-dependent oxidoreductase family. The cofactor is FAD.

Its subcellular location is the cytoplasm. The catalysed reaction is 2 reduced [nitric oxide reductase rubredoxin domain] + NAD(+) + H(+) = 2 oxidized [nitric oxide reductase rubredoxin domain] + NADH. It functions in the pathway nitrogen metabolism; nitric oxide reduction. Functionally, one of at least two accessory proteins for anaerobic nitric oxide (NO) reductase. Reduces the rubredoxin moiety of NO reductase. The chain is Nitric oxide reductase FlRd-NAD(+) reductase from Escherichia coli O45:K1 (strain S88 / ExPEC).